A 607-amino-acid polypeptide reads, in one-letter code: Elongation factor 4 (607 aa).

One can recognise a tr-type G domain in the interval 6–188 (SRIRNFSIIA…AIVARIPPPR (183 aa)). GTP is bound by residues 18–23 (DHGKST) and 135–138 (NKID).

This sequence belongs to the TRAFAC class translation factor GTPase superfamily. Classic translation factor GTPase family. LepA subfamily.

The protein resides in the cell inner membrane. The enzyme catalyses GTP + H2O = GDP + phosphate + H(+). In terms of biological role, required for accurate and efficient protein synthesis under certain stress conditions. May act as a fidelity factor of the translation reaction, by catalyzing a one-codon backward translocation of tRNAs on improperly translocated ribosomes. Back-translocation proceeds from a post-translocation (POST) complex to a pre-translocation (PRE) complex, thus giving elongation factor G a second chance to translocate the tRNAs correctly. Binds to ribosomes in a GTP-dependent manner. This chain is Elongation factor 4, found in Sphingopyxis alaskensis (strain DSM 13593 / LMG 18877 / RB2256) (Sphingomonas alaskensis).